We begin with the raw amino-acid sequence, 267 residues long: MSGGGVIRGPAGNNDCRIYVGNLPPDIRTKDIEDVFYKYGAIRDIDLKNRRGGPPFAFVEFEDPRDAEDAVYGRDGYDYDGYRLRVEFPRSGRGAGGRGGGGGGGGGGGGGGGGGGGGGGGGGGGAPRGRYGPPSRRSEYRVVVSGLPPSGSWQDLKDHMREAGDVCYADVFRDGTGVVEFVRKEDMTYAVRKLDNTKFRSHEGETAYIRVKVDGPRSPSYGRSRSRSRSRSRSRSRSNSRSRSYSPRRSRGSPRYSPRHSRSRSRT.

Residues 16-91 (CRIYVGNLPP…YRLRVEFPRS (76 aa)) enclose the RRM 1 domain. Disordered regions lie at residues 90–137 (RSGR…PSRR) and 212–267 (KVDG…RSRT). A compositionally biased stretch (gly residues) spans 93–127 (RGAGGRGGGGGGGGGGGGGGGGGGGGGGGGGGGAP). The region spanning 140–214 (YRVVVSGLPP…ETAYIRVKVD (75 aa)) is the RRM 2 domain. Over residues 224 to 267 (SRSRSRSRSRSRSRSNSRSRSYSPRRSRGSPRYSPRHSRSRSRT) the composition is skewed to basic residues.

The protein belongs to the splicing factor SR family.

The protein localises to the cytoplasm. Its subcellular location is the nucleus speckle. In terms of biological role, may play a role in preventing exon skipping, ensuring the accuracy of splicing and regulating alternative splicing. In Xenopus tropicalis (Western clawed frog), this protein is Serine/arginine-rich splicing factor 1 (srsf1).